The primary structure comprises 136 residues: Cytochrome c-550 (136 aa).

A signal peptide spans 1-28; it reads MTKLTFGALVALAMTAAASTAMSSKAMA. Heme c is bound by residues cysteine 41, cysteine 44, histidine 45, and methionine 107.

Post-translationally, binds 1 heme c group covalently per subunit. The N-terminus is blocked.

The protein resides in the periplasm. Plays a role in bacteroid respiration under conditions of oxygen limitation. Required for electron-transfer during denitrification. This chain is Cytochrome c-550 (cycA), found in Bradyrhizobium diazoefficiens (strain JCM 10833 / BCRC 13528 / IAM 13628 / NBRC 14792 / USDA 110).